The chain runs to 78 residues: U-scoloptoxin(15)-Ssm2a (78 aa).

The signal sequence occupies residues 1 to 23; it reads MEKKIIFLCFFVSLLTLPEFISS. An important for inhibition of KCNQ4 region spans residues 34-37; the sequence is PEKK. Disulfide bonds link cysteine 44/cysteine 70 and cysteine 48/cysteine 72.

It belongs to the SLPTX(15) family. Expressed by the venom gland.

The protein resides in the secreted. The chain is U-scoloptoxin(15)-Ssm2a from Scolopendra mutilans (Chinese red-headed centipede).